Consider the following 405-residue polypeptide: Tryptophan synthase beta chain (405 aa).

Lys-98 is modified (N6-(pyridoxal phosphate)lysine).

The protein belongs to the TrpB family. As to quaternary structure, tetramer of two alpha and two beta chains. Pyridoxal 5'-phosphate serves as cofactor.

The enzyme catalyses (1S,2R)-1-C-(indol-3-yl)glycerol 3-phosphate + L-serine = D-glyceraldehyde 3-phosphate + L-tryptophan + H2O. Its pathway is amino-acid biosynthesis; L-tryptophan biosynthesis; L-tryptophan from chorismate: step 5/5. The beta subunit is responsible for the synthesis of L-tryptophan from indole and L-serine. This chain is Tryptophan synthase beta chain, found in Xylella fastidiosa (strain M23).